The sequence spans 72 residues: Translation initiation factor IF-1 (72 aa).

The 72-residue stretch at Met1 to Arg72 folds into the S1-like domain.

This sequence belongs to the IF-1 family. In terms of assembly, component of the 30S ribosomal translation pre-initiation complex which assembles on the 30S ribosome in the order IF-2 and IF-3, IF-1 and N-formylmethionyl-tRNA(fMet); mRNA recruitment can occur at any time during PIC assembly.

It localises to the cytoplasm. Its function is as follows. One of the essential components for the initiation of protein synthesis. Stabilizes the binding of IF-2 and IF-3 on the 30S subunit to which N-formylmethionyl-tRNA(fMet) subsequently binds. Helps modulate mRNA selection, yielding the 30S pre-initiation complex (PIC). Upon addition of the 50S ribosomal subunit IF-1, IF-2 and IF-3 are released leaving the mature 70S translation initiation complex. This Pseudomonas syringae pv. tomato (strain ATCC BAA-871 / DC3000) protein is Translation initiation factor IF-1.